The primary structure comprises 225 residues: Large ribosomal subunit protein uL1 (225 aa).

This sequence belongs to the universal ribosomal protein uL1 family. In terms of assembly, part of the 50S ribosomal subunit.

Functionally, binds directly to 23S rRNA. Probably involved in E site tRNA release. In terms of biological role, protein L1 is also a translational repressor protein, it controls the translation of its operon by binding to its mRNA. The chain is Large ribosomal subunit protein uL1 from Thermofilum pendens (strain DSM 2475 / Hrk 5).